We begin with the raw amino-acid sequence, 566 residues long: Arginine--tRNA ligase (566 aa).

The 'HIGH' region motif lies at 124–134 (ANPNGPLHIGH).

Belongs to the class-I aminoacyl-tRNA synthetase family.

Its subcellular location is the cytoplasm. It carries out the reaction tRNA(Arg) + L-arginine + ATP = L-arginyl-tRNA(Arg) + AMP + diphosphate. The polypeptide is Arginine--tRNA ligase (argS) (Methanocaldococcus jannaschii (strain ATCC 43067 / DSM 2661 / JAL-1 / JCM 10045 / NBRC 100440) (Methanococcus jannaschii)).